The primary structure comprises 426 residues: Glutamyl-tRNA reductase (426 aa).

Substrate is bound by residues 49–52 (TCNR), Ser-109, 114–116 (EGQ), and Gln-120. The active-site Nucleophile is Cys-50. 189 to 194 (GAGETG) provides a ligand contact to NADP(+).

The protein belongs to the glutamyl-tRNA reductase family. Homodimer.

The enzyme catalyses (S)-4-amino-5-oxopentanoate + tRNA(Glu) + NADP(+) = L-glutamyl-tRNA(Glu) + NADPH + H(+). The protein operates within porphyrin-containing compound metabolism; protoporphyrin-IX biosynthesis; 5-aminolevulinate from L-glutamyl-tRNA(Glu): step 1/2. It participates in porphyrin-containing compound metabolism; chlorophyll biosynthesis. Catalyzes the NADPH-dependent reduction of glutamyl-tRNA(Glu) to glutamate 1-semialdehyde (GSA). This is Glutamyl-tRNA reductase from Chlorobium chlorochromatii (strain CaD3).